The following is a 338-amino-acid chain: Large ribosomal subunit protein uL3 (338 aa).

Disordered regions lie at residues 1 to 44 (MPQP…GFAG), 151 to 170 (AVPSVPKKKPDVMETRVGGG), 206 to 259 (VTKG…GQTG), and 312 to 338 (FRPAVRPNDQPRLDPEVRYVSNESNQG). Polar residues predominate over residues 22–31 (SETPRFNSWP). The segment covering 220–237 (GVQKRKGKHARQGWRRRI) has biased composition (basic residues). The span at 247–259 (RVRSTVPQQGQTG) shows a compositional bias: polar residues.

It belongs to the universal ribosomal protein uL3 family. Part of the 50S ribosomal subunit. Forms a cluster with proteins L14 and L24e. Interacts weakly with protein L13.

Functionally, one of the primary rRNA binding proteins, it binds directly near the 3'-end of the 23S rRNA, where it nucleates assembly of the 50S subunit. The polypeptide is Large ribosomal subunit protein uL3 (rpl3) (Haloarcula marismortui (strain ATCC 43049 / DSM 3752 / JCM 8966 / VKM B-1809) (Halobacterium marismortui)).